The following is a 501-amino-acid chain: Mitochondrial inner membrane i-AAA protease supercomplex subunit MGR3 (501 aa).

The Mitochondrial matrix segment spans residues M1–R77. Residues R39 to L72 form a disordered region. Residues S78–F95 traverse the membrane as a helical segment. Residues K96–N501 lie on the Mitochondrial intermembrane side of the membrane. TPR repeat units lie at residues Q109–S144, T154–A187, G386–N420, and A440–T473.

The protein belongs to the MGR3 family. Component of the mitochondrial inner membrane i-AAA protease supercomplex composed of MGR1, MGR3 and YME1. With MGR1, forms a subcomplex that binds to YME1 and to substrates to facilitate proteolysis.

It localises to the mitochondrion inner membrane. In terms of biological role, component of the mitochondrial inner membrane i-AAA protease supercomplex, which degrades misfolded mitochondrial proteins. Together with MGR1, functions in an adapter complex that targets substrates to the i-AAA protease for degradation. Required for growth of cells lacking the mitochondrial genome. This Saccharomyces cerevisiae (strain ATCC 204508 / S288c) (Baker's yeast) protein is Mitochondrial inner membrane i-AAA protease supercomplex subunit MGR3 (MGR3).